Reading from the N-terminus, the 967-residue chain is E3 ubiquitin-protein ligase arkadia-C (967 aa).

Disordered regions lie at residues 57–175 (QQID…VSSL) and 193–276 (RKRF…SGGM). A compositionally biased stretch (low complexity) spans 112–131 (SSFSDCISSPSSSSHFGDSD). The span at 149 to 160 (GINSTPRTQSAR) shows a compositional bias: polar residues. The span at 232–251 (SSSSSSENDLSSESSSSSST) shows a compositional bias: low complexity. The SUMO interaction motif 1 (SIM) motif lies at 280–284 (VVVIE). Positions 305 to 311 (EVEIVTV) match the SUMO interaction motif 2 (SIM) motif. Positions 321–343 (LGHPRSHWGQNSQSGRTQEHRTR) are disordered. Residues 360–364 (VVDLT) carry the SUMO interaction motif 3 (SIM) motif. Disordered stretches follow at residues 368–452 (DDPT…MPRL), 482–548 (HSHH…LSNN), 629–657 (LHHQ…MDYV), and 669–689 (PSLT…LSTA). The span at 385 to 395 (VSTVSSNTSTS) shows a compositional bias: low complexity. Basic residues predominate over residues 482–498 (HSHHFPHHHHHHHHHSS). Residues 629–642 (LHHQTSACPHSNPA) show a composition bias toward polar residues. Residues 643 to 654 (SQPPPPPPPPPM) show a composition bias toward pro residues. Residues 880 to 882 (YPH) form a ubiquitin binding region. Residues cysteine 915 and cysteine 918 each coordinate Zn(2+). Residues 915-956 (CTICLSILEEGEDVRRLPCMHLFHQVCVDQWLITNKKCPICR) form an RING-type; atypical zinc finger. The tract at residues 930–934 (RLPCM) is ubiquitin binding. 2 residues coordinate Zn(2+): histidine 938 and cysteine 941.

The protein belongs to the Arkadia family. In terms of assembly, monomer.

The protein resides in the nucleus. The protein localises to the cytoplasm. It is found in the PML body. The catalysed reaction is S-ubiquitinyl-[E2 ubiquitin-conjugating enzyme]-L-cysteine + [acceptor protein]-L-lysine = [E2 ubiquitin-conjugating enzyme]-L-cysteine + N(6)-ubiquitinyl-[acceptor protein]-L-lysine.. It functions in the pathway protein modification; protein ubiquitination. Its activity is regulated as follows. Binds free ubiquitin non-covalently via its RING-type zinc finger. Ubiquitin-binding leads to enhance the E3 ubiquitin-protein ligase activity by stabilizing the ubiquitin-conjugating enzyme E2 (donor ubiquitin) in the 'closed' conformation and activating ubiquitin transfer. E3 ubiquitin-protein ligase required for mesoderm patterning during embryonic development. Acts as an enhancer of the transcriptional responses of the smad2/smad3 effectors, which are activated downstream of BMP. Acts by mediating ubiquitination and degradation of SMAD inhibitors such as smad7, inducing their proteasomal degradation and thereby enhancing the transcriptional activity of TGF-beta and BMP. Specifically binds polysumoylated chains via SUMO interaction motifs (SIMs) and mediates ubiquitination of sumoylated substrates. The regulation of the BMP-SMAD signaling is however independent of sumoylation and is not dependent of SUMO interaction motifs (SIMs). This is E3 ubiquitin-protein ligase arkadia-C (rnf111-c) from Xenopus laevis (African clawed frog).